A 321-amino-acid chain; its full sequence is Methionyl-tRNA formyltransferase (321 aa).

112 to 115 (SILP) serves as a coordination point for (6S)-5,6,7,8-tetrahydrofolate.

The protein belongs to the Fmt family.

It catalyses the reaction L-methionyl-tRNA(fMet) + (6R)-10-formyltetrahydrofolate = N-formyl-L-methionyl-tRNA(fMet) + (6S)-5,6,7,8-tetrahydrofolate + H(+). In terms of biological role, attaches a formyl group to the free amino group of methionyl-tRNA(fMet). The formyl group appears to play a dual role in the initiator identity of N-formylmethionyl-tRNA by promoting its recognition by IF2 and preventing the misappropriation of this tRNA by the elongation apparatus. In Shewanella piezotolerans (strain WP3 / JCM 13877), this protein is Methionyl-tRNA formyltransferase.